A 36-amino-acid polypeptide reads, in one-letter code: Photosystem I reaction center subunit VIII (36 aa).

A helical membrane pass occupies residues 8 to 28 (AILVPIVGLVFPALSMALFFI).

Belongs to the PsaI family.

Its subcellular location is the plastid. The protein resides in the chloroplast thylakoid membrane. Functionally, may help in the organization of the PsaL subunit. The protein is Photosystem I reaction center subunit VIII of Phaeodactylum tricornutum (strain CCAP 1055/1).